Here is a 429-residue protein sequence, read N- to C-terminus: Glutamyl-tRNA reductase (429 aa).

Substrate-binding positions include T49–R52, S107, E112–Q114, and Q118. Catalysis depends on C50, which acts as the Nucleophile. Position 187–192 (G187–I192) interacts with NADP(+).

It belongs to the glutamyl-tRNA reductase family. As to quaternary structure, homodimer.

The enzyme catalyses (S)-4-amino-5-oxopentanoate + tRNA(Glu) + NADP(+) = L-glutamyl-tRNA(Glu) + NADPH + H(+). The protein operates within porphyrin-containing compound metabolism; protoporphyrin-IX biosynthesis; 5-aminolevulinate from L-glutamyl-tRNA(Glu): step 1/2. Functionally, catalyzes the NADPH-dependent reduction of glutamyl-tRNA(Glu) to glutamate 1-semialdehyde (GSA). The polypeptide is Glutamyl-tRNA reductase (Pseudomonas fluorescens (strain SBW25)).